The following is a 254-amino-acid chain: Pimeloyl-[acyl-carrier protein] methyl ester esterase (254 aa).

The AB hydrolase-1 domain maps to 14 to 242 (LVLLHGWGMN…ASHAPFISHP (229 aa)). Substrate is bound by residues W20, 82 to 83 (SL), and 143 to 147 (FLAIQ). The active-site Nucleophile is the S82. Residues D207 and H235 contribute to the active site. Residue H235 coordinates substrate.

It belongs to the AB hydrolase superfamily. Carboxylesterase BioH family. As to quaternary structure, monomer.

It is found in the cytoplasm. It catalyses the reaction 6-carboxyhexanoyl-[ACP] methyl ester + H2O = 6-carboxyhexanoyl-[ACP] + methanol + H(+). The protein operates within cofactor biosynthesis; biotin biosynthesis. The physiological role of BioH is to remove the methyl group introduced by BioC when the pimeloyl moiety is complete. It allows to synthesize pimeloyl-ACP via the fatty acid synthetic pathway through the hydrolysis of the ester bonds of pimeloyl-ACP esters. The protein is Pimeloyl-[acyl-carrier protein] methyl ester esterase of Aeromonas hydrophila subsp. hydrophila (strain ATCC 7966 / DSM 30187 / BCRC 13018 / CCUG 14551 / JCM 1027 / KCTC 2358 / NCIMB 9240 / NCTC 8049).